We begin with the raw amino-acid sequence, 194 residues long: MESFEVSSIDLKVFGKWDTKVEIRDPSLKKYIGLMPVYLPHTGGRHEHRRFGKAKLPIVERLINNVMRPGRNKGKKMLAYNIVKTAFDIIALKTGQNPIQVLVKAIENSAPREEVTRIMYGGIVYYVAVDVAPQRRVDLALRHLVMGAKEASFNNPKPIEEALAEEIIAAASNDPKSFAIRKKEEIERIALSSR.

This sequence belongs to the universal ribosomal protein uS7 family. As to quaternary structure, part of the 30S ribosomal subunit.

Its function is as follows. One of the primary rRNA binding proteins, it binds directly to 16S rRNA where it nucleates assembly of the head domain of the 30S subunit. Is located at the subunit interface close to the decoding center. The sequence is that of Small ribosomal subunit protein uS7 from Sulfurisphaera tokodaii (strain DSM 16993 / JCM 10545 / NBRC 100140 / 7) (Sulfolobus tokodaii).